The primary structure comprises 69 residues: Conopeptide Y-Fe1 (69 aa).

Residues 1-20 (MSKLGVVLFVFLLLLPLAAP) form the signal peptide. A propeptide spanning residues 21–69 (QPVGDQPADQPADRNAEARGTYLYPFSYYRLWRYFTRFLHKQPYYYVHI) is cleaved from the precursor.

This sequence belongs to the conotoxin M superfamily. Conopeptide Y family. In terms of tissue distribution, expressed by the venom duct.

The protein localises to the secreted. Functionally, tyrosine-rich conopeptide that specifically targets voltage-gated potassium channel Kv1.6/KCNA6 (IC(50) is 8.8 uM) that is expressed in Xenopus oocytes. In vivo, causes seizures (at 5 nmol) and death (20 nmol) when intracranially injected into mice, and causes paralysis (at 10 pmol) to C.elegans. The sequence is that of Conopeptide Y-Fe1 from Conus ferrugineus (Cone snail).